The following is a 677-amino-acid chain: Testis-specific Y-encoded-like protein 2 (677 aa).

The interval 1–54 (MDRPDEGPPAKTPRLSSSEPRQRDLPPPPPPPLQRLPLPPPQQRPRPQEETEAA) is disordered. A Glycyl lysine isopeptide (Lys-Gly) (interchain with G-Cter in SUMO2) cross-link involves residue Lys-11. Phosphoserine is present on Ser-18. Residues 25-44 (LPPPPPPPLQRLPLPPPQQR) show a composition bias toward pro residues. Residues Lys-158 and Lys-160 each participate in a glycyl lysine isopeptide (Lys-Gly) (interchain with G-Cter in SUMO2) cross-link. The segment at 175-202 (KESVRRRQRRRRRRRKQRKAKESRERSA) is disordered. The span at 178–193 (VRRRQRRRRRRRKQRK) shows a compositional bias: basic residues. Thr-333 carries the phosphothreonine modification. A disordered region spans residues 469–658 (ANENLCDSEN…EVNSEDSDIQ (190 aa)). Residues 484 to 493 (GYNTKITDNK) are compositionally biased toward polar residues. Over residues 509–525 (EKNTYDSEDSNSEKADG) the composition is skewed to basic and acidic residues. Residues 526 to 540 (DNTTLRDNQQVTNIQ) show a composition bias toward polar residues. Acidic residues-rich tracts occupy residues 543 to 581 (SDSDNGDEGSDDEDDDGNEGDNEGSDDDDDDNEGSDDDD) and 606 to 627 (DYEEEVELISEDSVEEEEETSE). Positions 639 to 650 (DERIYGEERSEV) are enriched in basic and acidic residues. 3 positions are modified to phosphoserine: Ser-648, Ser-652, and Ser-655.

Belongs to the nucleosome assembly protein (NAP) family. As to quaternary structure, interacts with histones. Interacts with CASK. Part of a complex containing CASK, TBR1 and TSPYL2. In terms of processing, phosphorylation at Thr-333 impairs function on cell proliferation. In terms of tissue distribution, present at high levels in the pituitary gland and at moderate levels in adrenal gland, brain, testis and ovary. In brain, expressed both in mature neurons and progenitor cells (at protein level).

Its subcellular location is the nucleus. The protein resides in the cytoplasm. Part of the CASK/TBR1/TSPYL2 transcriptional complex which modulates gene expression in response to neuronal synaptic activity, probably by facilitating nucleosome assembly. May inhibit cell proliferation by inducing p53-dependent CDKN1A expression. The sequence is that of Testis-specific Y-encoded-like protein 2 (Tspyl2) from Mus musculus (Mouse).